Here is a 145-residue protein sequence, read N- to C-terminus: Putative pre-16S rRNA nuclease (145 aa).

Belongs to the YqgF nuclease family.

It localises to the cytoplasm. In terms of biological role, could be a nuclease involved in processing of the 5'-end of pre-16S rRNA. The protein is Putative pre-16S rRNA nuclease of Pseudomonas fluorescens.